The chain runs to 153 residues: Proline-rich membrane anchor 1 (153 aa).

Residues 1-35 form the signal peptide; sequence MLLRDLVLRRGCCWSSLLLHCALHPLWGFVQVTHG. Residues 36–92 are Extracellular-facing; it reads EPQKSCSKVTDSCRHVCQCRPPPPLPPPPPPPPPPRLLSAPAPNSTSCPTEESWWSG. A PRAD domain is found at 56-70; sequence PPPPLPPPPPPPPPP. Over residues 59–71 the composition is skewed to pro residues; that stretch reads PLPPPPPPPPPPR. Residues 59–79 form a disordered region; it reads PLPPPPPPPPPPRLLSAPAPN. Asn79 carries N-linked (GlcNAc...) asparagine glycosylation. Residues 93 to 113 traverse the membrane as a helical segment; sequence LVIIIAVCCASLVFLTVLVII. The Cytoplasmic portion of the chain corresponds to 114 to 153; the sequence is CYKAIKRKPLRKDENGTSVAEYPMSASQSNKGVDVNNAVV.

In terms of assembly, interacts with ACHE, probably through disulfide bonds.

The protein resides in the cell membrane. The protein localises to the cell junction. Its subcellular location is the synapse. In terms of biological role, required to anchor acetylcholinesterase (ACHE) to the basal lamina of the neuromuscular junction and to the membrane of neuronal synapses in brain. Also able to organize ACHE into tetramers. The polypeptide is Proline-rich membrane anchor 1 (PRIMA1) (Homo sapiens (Human)).